Here is a 467-residue protein sequence, read N- to C-terminus: Glutamate--tRNA ligase (467 aa).

The short motif at 9-19 (PSPTGYLHIGG) is the 'HIGH' region element. The 'KMSKS' region signature appears at 237–241 (KLSKR). Lys240 is a binding site for ATP.

Belongs to the class-I aminoacyl-tRNA synthetase family. Glutamate--tRNA ligase type 1 subfamily. Monomer.

Its subcellular location is the cytoplasm. It carries out the reaction tRNA(Glu) + L-glutamate + ATP = L-glutamyl-tRNA(Glu) + AMP + diphosphate. Functionally, catalyzes the attachment of glutamate to tRNA(Glu) in a two-step reaction: glutamate is first activated by ATP to form Glu-AMP and then transferred to the acceptor end of tRNA(Glu). The chain is Glutamate--tRNA ligase from Xylella fastidiosa (strain M12).